The following is a 232-amino-acid chain: Large ribosomal subunit protein uL1 (232 aa).

This sequence belongs to the universal ribosomal protein uL1 family. Part of the 50S ribosomal subunit.

Binds directly to 23S rRNA. The L1 stalk is quite mobile in the ribosome, and is involved in E site tRNA release. Functionally, protein L1 is also a translational repressor protein, it controls the translation of the L11 operon by binding to its mRNA. In Bordetella bronchiseptica (strain ATCC BAA-588 / NCTC 13252 / RB50) (Alcaligenes bronchisepticus), this protein is Large ribosomal subunit protein uL1.